The primary structure comprises 23 residues: SV40 early leader protein (23 aa).

Residues 1 to 23 (MQRPRPPRPLSYSRSSEEAFLEA) are disordered.

It belongs to the polyomavirus early leader protein family.

Its function is as follows. May play a role in the lytic cycle. The polypeptide is SV40 early leader protein (Macaca (macaques)).